The following is a 76-amino-acid chain: Acyl carrier protein (76 aa).

A Carrier domain is found at 1–76 (MAIFDDIKEV…DVVRYIETNK (76 aa)). Position 36 is an O-(pantetheine 4'-phosphoryl)serine (Ser36).

Belongs to the acyl carrier protein (ACP) family. 4'-phosphopantetheine is transferred from CoA to a specific serine of apo-ACP by AcpS. This modification is essential for activity because fatty acids are bound in thioester linkage to the sulfhydryl of the prosthetic group.

It is found in the cytoplasm. It participates in lipid metabolism; fatty acid biosynthesis. Its function is as follows. Carrier of the growing fatty acid chain in fatty acid biosynthesis. The sequence is that of Acyl carrier protein from Wolinella succinogenes (strain ATCC 29543 / DSM 1740 / CCUG 13145 / JCM 31913 / LMG 7466 / NCTC 11488 / FDC 602W) (Vibrio succinogenes).